A 241-amino-acid chain; its full sequence is MRIPLLAPDNYAFPDPAYALARCDGLVGVSGDLDAGRLLEAYRNGVFPWFSRDGWFFWYAVGPRAVVFPDRLHIPRSLAKTLRNGSYRVAVNGCFAEVVAHCAAAARPNQDGTWIAPEFQTAYLKLHEMGYAHSFECHYPDESGETRLAGGFYGVQIGRVFYGESMFALQPDASKIAFACAVPFLADLGVELIDCQQDTEHMRRFGSELLPFADFAERLRMLNAVPLKEEIGRREVACKGL.

Belongs to the L/F-transferase family.

The protein resides in the cytoplasm. The catalysed reaction is N-terminal L-lysyl-[protein] + L-leucyl-tRNA(Leu) = N-terminal L-leucyl-L-lysyl-[protein] + tRNA(Leu) + H(+). The enzyme catalyses N-terminal L-arginyl-[protein] + L-leucyl-tRNA(Leu) = N-terminal L-leucyl-L-arginyl-[protein] + tRNA(Leu) + H(+). It carries out the reaction L-phenylalanyl-tRNA(Phe) + an N-terminal L-alpha-aminoacyl-[protein] = an N-terminal L-phenylalanyl-L-alpha-aminoacyl-[protein] + tRNA(Phe). Functionally, functions in the N-end rule pathway of protein degradation where it conjugates Leu, Phe and, less efficiently, Met from aminoacyl-tRNAs to the N-termini of proteins containing an N-terminal arginine or lysine. This is Leucyl/phenylalanyl-tRNA--protein transferase from Neisseria meningitidis serogroup B (strain ATCC BAA-335 / MC58).